Reading from the N-terminus, the 315-residue chain is Methionyl-tRNA formyltransferase (315 aa).

Residue 113–116 (SLLP) participates in (6S)-5,6,7,8-tetrahydrofolate binding.

This sequence belongs to the Fmt family.

It carries out the reaction L-methionyl-tRNA(fMet) + (6R)-10-formyltetrahydrofolate = N-formyl-L-methionyl-tRNA(fMet) + (6S)-5,6,7,8-tetrahydrofolate + H(+). Functionally, attaches a formyl group to the free amino group of methionyl-tRNA(fMet). The formyl group appears to play a dual role in the initiator identity of N-formylmethionyl-tRNA by promoting its recognition by IF2 and preventing the misappropriation of this tRNA by the elongation apparatus. The sequence is that of Methionyl-tRNA formyltransferase from Edwardsiella ictaluri (strain 93-146).